We begin with the raw amino-acid sequence, 1065 residues long: Putative guanine nucleotide-exchange factor SED4 (1065 aa).

Residues 1–346 (MSGNSANYDV…SSSILRNIWK (346 aa)) are Cytoplasmic-facing. Phosphoserine is present on Ser-65. WD repeat units follow at residues 259–298 (FDLN…LVQL) and 302–341 (VHES…SSIL). A helical; Signal-anchor for type II membrane protein membrane pass occupies residues 347 to 365 (FFLNFVLLVVLAGAIQLGY). Residues 366–1065 (KHNVHGFIYK…VNYAGLHDEL (700 aa)) are Lumenal-facing. N-linked (GlcNAc...) asparagine glycosylation occurs at Asn-388. Disordered regions lie at residues 458–477 (TSAD…SSSF), 482–520 (VTNE…SESI), and 551–625 (QSES…SFLD). Residues 465–476 (SASSSSSSSSSS) are compositionally biased toward low complexity. Residues 482 to 495 (VTNEPIVSSPTSEI) show a composition bias toward polar residues. Low complexity predominate over residues 568–621 (STESPSLSHMPSSSSSSLSLSSSLTTSPTTALSTSTATAVTTTQTNPTNDAANT). Residue Asn-620 is glycosylated (N-linked (GlcNAc...) asparagine). 4 repeat units span residues 824–833 (IDNSEYTSVL), 834–843 (ADNLEPTSVL), 844–853 (ADNSEPTSVL), and 854–863 (ADSSEPTSVF). The 4 X 10 AA tandem repeats stretch occupies residues 824–863 (IDNSEYTSVLADNLEPTSVLADNSEPTSVLADSSEPTSVF). Asn-1039 is a glycosylation site (N-linked (GlcNAc...) asparagine). The Prevents secretion from ER signature appears at 1062–1065 (HDEL).

Belongs to the WD repeat SEC12 family.

The protein localises to the endoplasmic reticulum membrane. It is found in the golgi apparatus membrane. In terms of biological role, putative guanine nucleotide-exchange factor (GEF) involved in the formation or budding of transport vesicles from the ER. Positive regulator of SAR1 probably through inhibition of the GTPase activation by SEC23. This is Putative guanine nucleotide-exchange factor SED4 (SED4) from Saccharomyces cerevisiae (strain ATCC 204508 / S288c) (Baker's yeast).